Consider the following 400-residue polypeptide: Enoyl-[acyl-carrier-protein] reductase [NADH] (400 aa).

NAD(+) contacts are provided by residues 48–53, 74–75, 111–112, and 139–140; these read GASTGY, FE, DA, and LA. Y225 contributes to the substrate binding site. The active-site Proton donor is Y235. Residues K244 and 273–275 each bind NAD(+); that span reads VVT.

This sequence belongs to the TER reductase family. As to quaternary structure, monomer.

The enzyme catalyses a 2,3-saturated acyl-[ACP] + NAD(+) = a (2E)-enoyl-[ACP] + NADH + H(+). Its pathway is lipid metabolism; fatty acid biosynthesis. Involved in the final reduction of the elongation cycle of fatty acid synthesis (FAS II). Catalyzes the reduction of a carbon-carbon double bond in an enoyl moiety that is covalently linked to an acyl carrier protein (ACP). This chain is Enoyl-[acyl-carrier-protein] reductase [NADH], found in Burkholderia cenocepacia (strain ATCC BAA-245 / DSM 16553 / LMG 16656 / NCTC 13227 / J2315 / CF5610) (Burkholderia cepacia (strain J2315)).